The primary structure comprises 142 residues: Large ribosomal subunit protein uL11 (142 aa).

Belongs to the universal ribosomal protein uL11 family. In terms of assembly, part of the ribosomal stalk of the 50S ribosomal subunit. Interacts with L10 and the large rRNA to form the base of the stalk. L10 forms an elongated spine to which L12 dimers bind in a sequential fashion forming a multimeric L10(L12)X complex. In terms of processing, one or more lysine residues are methylated.

Its function is as follows. Forms part of the ribosomal stalk which helps the ribosome interact with GTP-bound translation factors. The protein is Large ribosomal subunit protein uL11 of Histophilus somni (strain 129Pt) (Haemophilus somnus).